A 762-amino-acid polypeptide reads, in one-letter code: ABC-type oligopeptide transporter ABCB9 (762 aa).

A run of 8 helical transmembrane segments spans residues 7–27, 47–67, 84–104, 116–136, 181–201, 221–241, 315–335, and 412–432; these read VVVT…IYAF, VLDL…ATIG, LVIT…LLLF, FWAL…LWGL, VAFL…ETFL, FTTA…AAGI, VFMF…FPII, and SGLT…HLVI. One can recognise an ABC transmembrane type-1 domain in the interval 184–467; sequence LVAASFFLIV…VGSVYSGLMQ (284 aa). The region spanning 500–736 is the ABC transporter domain; that stretch reads VDFENVTFTY…GGLYAKLVQR (237 aa). Residue 535–542 participates in ATP binding; sequence GPSGSGKS.

Belongs to the ABC transporter superfamily. ABCB family. MHC peptide exporter (TC 3.A.1.209) subfamily. In terms of assembly, homodimer. Interacts (via TMD0 region) with LAMP1; this interaction strongly stabilizes ABCB9 and protects ABCB9 against lysosomal degradation. Interacts (via TMD0 region) with LAMP2 (isoform LAMP-2B). Interacts (via TMD0) with YIF1B; this interaction allows (but is not essential) the ER-to-Golgi trafficking and strongly depends on a salt bridge within TMD0. In terms of tissue distribution, found in testis, particularly in the Sertoli cells of the seminiferous tubules. Also expressed in kidney, brain, heart, lung, spleen, thymus, intestine and testis. Higher expression detected in brain and testis than in thymus and intestine.

The protein localises to the lysosome membrane. It catalyses the reaction a [oligopeptide](in) + ATP + H2O = a [oligopeptide](out) + ADP + phosphate + H(+). ATP-dependent low-affinity peptide transporter which translocates a broad spectrum of peptides from the cytosol to the lysosomal lumen for degradation. Displays a broad peptide length specificity from 6-mer up to at least 59-mer peptides with an optimum of 23-mers. Binds and transports smaller and larger peptides with the same affinity. Favors positively charged, aromatic or hydrophobic residues in the N- and C-terminal positions whereas negatively charged residues as well as asparagine and methionine are not favored. The polypeptide is ABC-type oligopeptide transporter ABCB9 (Rattus norvegicus (Rat)).